The primary structure comprises 496 residues: Palmitoleoyl-protein carboxylesterase NOTUM (496 aa).

A signal peptide spans 1–19; it reads MGRGVRVLLLLSLLHCAGG. Residues 21 to 46 form a disordered region; it reads EGRKTWRRRGQQPPPPPRTEAAPAAG. The residue at position 81 (Ser-81) is a Phosphoserine; by FAM20C. N-linked (GlcNAc...) asparagine glycosylation occurs at Asn-96. Active-site charge relay system residues include Ser-232, Asp-340, and His-389.

The protein belongs to the pectinacetylesterase family. Notum subfamily. As to expression, rarely expressed in adult normal tissues.

The protein localises to the secreted. The enzyme catalyses [Wnt protein]-O-(9Z)-hexadecenoyl-L-serine + H2O = [Wnt protein]-L-serine + (9Z)-hexadecenoate + H(+). Carboxylesterase that acts as a key negative regulator of the Wnt signaling pathway by specifically mediating depalmitoleoylation of WNT proteins. Serine palmitoleoylation of WNT proteins is required for efficient binding to frizzled receptors. In Homo sapiens (Human), this protein is Palmitoleoyl-protein carboxylesterase NOTUM.